The sequence spans 459 residues: Zinc finger transcription factor lin-29 (459 aa).

Over residues 1-14 the composition is skewed to polar residues; sequence MDQTVLDSAFNSPV. A disordered region spans residues 1 to 73; it reads MDQTVLDSAF…GSTGSTPAHH (73 aa). The span at 16–56 shows a compositional bias: low complexity; it reads SGIAGTTTGSGSTTHFGVGTNFKVSVRSSSRSTDGTDSTDG. Polar residues predominate over residues 57–73; that stretch reads ANSDNVTGSTGSTPAHH. 5 consecutive C2H2-type zinc fingers follow at residues 151–173, 180–202, 208–232, 238–260, and 269–291; these read YKCTQCVKAFANSSYLSQHMRIH, GPCNYCGKKFTQLSHLQQHIRTH, YKCKFTGCDKAFSQLSNLQSHSRCH, FKCNSCYKCFTDEQSLLDHIPKH, and HICPFCGKSYTQQTYLQKHMTKH. Positions 390–406 are interacts with mab-10; the sequence is PGFNMITPLENIQRYNG. Low complexity predominate over residues 423-444; that stretch reads VSSTPSSTSSSSAGSSSSQGGV. A disordered region spans residues 423–459; it reads VSSTPSSTSSSSAGSSSSQGGVFNPQSLINNMKNHSY. Over residues 446–459 the composition is skewed to polar residues; it reads NPQSLINNMKNHSY.

In terms of assembly, interacts (via C-terminus) with transcription cofactor mab-10. Expressed in lateral hypodermal seam cells (at protein level).

It is found in the nucleus. In terms of biological role, transcription factor which regulates the expression of various genes, including those involved in cuticle synthesis and maintenance, such as collagens, and in lipid metabolism. Binds to promoter regions of genes, at 5'-[(T/G)TTTTTT(A/T/C/G)]-3' consensus sequences. Heterochronic protein which controls the choice of stage specific cell fates, including at the juvenile to adult transition. Promotes differentiation, together with transcriptional cofactor mab-10, perhaps as part of a transcriptional complex. Required for vulval morphogenesis and egg laying; perhaps by acting in a subset of the lateral seam cells. Involved in the exit of seam cells from the cell cycle. Required for specification of uterine pi-cell fate, acting upstream of lin-12 Notch signaling, perhaps via maintenance of lag-2 expression in the anchor cell (AC). Involved in morphogenesis of the specialized male tail used in mating. Acts cell non-autonomously from the hypodermis to regulate expression of genes in the intestine, including genes involved in lipid metabolism. May regulate vitellogenesis via the mTORC2 signaling mediated pathway, independently of daf-16. May promote nuclear accumulation of mab-10 in seam cells post-transcriptionally. Dispensable for seam cell fusion. Required for seam cell fusion. This is Zinc finger transcription factor lin-29 from Caenorhabditis elegans.